The following is a 249-amino-acid chain: Proteasome subunit alpha 2 (249 aa).

M1 carries the N-acetylmethionine modification.

The protein belongs to the peptidase T1A family. As to quaternary structure, the 20S proteasome core is composed of 14 alpha and 14 beta subunits that assemble into four stacked heptameric rings, resulting in a barrel-shaped structure. The two inner rings, each composed of seven catalytic beta subunits, are sandwiched by two outer rings, each composed of seven alpha subunits. H.volcanii produces at least 2 types of 20S proteasomes: an alpha1-beta proteasome and a proteasome containing all three subunits (alpha1, alpha2, and beta) that appears to be asymmetrical with homo-oligomeric alpha1 and alpha2 rings positioned on separate ends. The catalytic chamber with the active sites is on the inside of the barrel. Has probably a gated structure, the ends of the cylinder being occluded by the N-termini of the alpha-subunits. Is likely capped at one or both ends by the proteasome regulatory ATPase, PAN.

The protein localises to the cytoplasm. Its activity is regulated as follows. The formation of the proteasomal ATPase PAN-20S proteasome complex, via the docking of the C-termini of PAN into the intersubunit pockets in the alpha-rings, triggers opening of the gate for substrate entry. Interconversion between the open-gate and close-gate conformations leads to a dynamic regulation of the 20S proteasome proteolysis activity. Its function is as follows. Component of the proteasome core, a large protease complex with broad specificity involved in protein degradation. The H.volcanii alpha1-beta-alpha2 proteasome is able to cleave oligopeptides after Tyr and thus displays chymotrypsin-like activity. This Haloferax volcanii (strain ATCC 29605 / DSM 3757 / JCM 8879 / NBRC 14742 / NCIMB 2012 / VKM B-1768 / DS2) (Halobacterium volcanii) protein is Proteasome subunit alpha 2.